We begin with the raw amino-acid sequence, 367 residues long: Cobalt-precorrin-5B C(1)-methyltransferase (367 aa).

The protein belongs to the CbiD family.

The enzyme catalyses Co-precorrin-5B + S-adenosyl-L-methionine = Co-precorrin-6A + S-adenosyl-L-homocysteine. It functions in the pathway cofactor biosynthesis; adenosylcobalamin biosynthesis; cob(II)yrinate a,c-diamide from sirohydrochlorin (anaerobic route): step 6/10. Its function is as follows. Catalyzes the methylation of C-1 in cobalt-precorrin-5B to form cobalt-precorrin-6A. The chain is Cobalt-precorrin-5B C(1)-methyltransferase from Leptospira interrogans serogroup Icterohaemorrhagiae serovar copenhageni (strain Fiocruz L1-130).